The following is a 221-amino-acid chain: Vesicle-associated membrane protein 722 (221 aa).

Over 1 to 196 (MAQQSLIYSF…MWFQNMKIKL (196 aa)) the chain is Cytoplasmic. The Longin domain maps to 10–114 (FVARGTVILV…SLNKEFGSKL (105 aa)). One can recognise a v-SNARE coiled-coil homology domain in the interval 130 to 190 (KLAKVKAQVS…TQMRRKMWFQ (61 aa)). Residues 197–217 (IVLAIIIALILIIILSICGGF) traverse the membrane as a helical; Anchor for type IV membrane protein segment. The Vesicular portion of the chain corresponds to 218–221 (NCGK).

The protein belongs to the synaptobrevin family. Highly expressed in stems and roots. Detected in flowers and leaves.

Its subcellular location is the cell membrane. The protein resides in the early endosome membrane. In terms of biological role, involved in the targeting and/or fusion of transport vesicles to their target membrane. The sequence is that of Vesicle-associated membrane protein 722 from Arabidopsis thaliana (Mouse-ear cress).